We begin with the raw amino-acid sequence, 360 residues long: Sorbitol dehydrogenase (360 aa).

Residue Cys-42 participates in Zn(2+) binding. Tyr-48 is a binding site for substrate. Positions 67 and 68 each coordinate Zn(2+). Glu-153 is a substrate binding site. NAD(+) is bound by residues Asp-201, Arg-206, 277–279 (AGN), and 301–303 (SFR). Substrate-binding residues include Arg-303 and Tyr-304.

Belongs to the zinc-containing alcohol dehydrogenase family. As to quaternary structure, homotetramer. Zn(2+) serves as cofactor.

The enzyme catalyses keto-D-fructose + NADH + H(+) = D-sorbitol + NAD(+). Polyol dehydrogenase that catalyzes the reversible NAD(+)-dependent oxidation of various sugar alcohols. Is active with D-sorbitol (D-glucitol) as substrate, leading to the C2-oxidized product D-fructose. Suppresses growth arrest induced by a p53 tumor mutant in fission yeast. The polypeptide is Sorbitol dehydrogenase (tms1) (Schizosaccharomyces pombe (strain 972 / ATCC 24843) (Fission yeast)).